We begin with the raw amino-acid sequence, 341 residues long: S-adenosylmethionine:tRNA ribosyltransferase-isomerase (341 aa).

It belongs to the QueA family. As to quaternary structure, monomer.

The protein localises to the cytoplasm. The enzyme catalyses 7-aminomethyl-7-carbaguanosine(34) in tRNA + S-adenosyl-L-methionine = epoxyqueuosine(34) in tRNA + adenine + L-methionine + 2 H(+). It functions in the pathway tRNA modification; tRNA-queuosine biosynthesis. Transfers and isomerizes the ribose moiety from AdoMet to the 7-aminomethyl group of 7-deazaguanine (preQ1-tRNA) to give epoxyqueuosine (oQ-tRNA). This Clostridium perfringens (strain ATCC 13124 / DSM 756 / JCM 1290 / NCIMB 6125 / NCTC 8237 / Type A) protein is S-adenosylmethionine:tRNA ribosyltransferase-isomerase.